The primary structure comprises 952 residues: ALS2 C-terminal-like protein (952 aa).

8 MORN repeats span residues 358-380, 381-403, 409-431, 432-454, 459-481, 483-505, 506-528, and 529-552; these read YDGEWCRAKPHGKGTLKWPDGRN, HVGTFYQGLEHGFGICLVPQASE, YKCHWREGRMCEYGICEYGTDEV, YKGYFQAGLRHGFGILESAPQAP, YTGHWERGQRSGYGIEEDRDRGE, YIGMWQADQRHGPGVVVTQAGVC, YQGTFQGDKMAGPGILLCEDDSL, and YEGTFTRDLTLLGKGKVTFPNGFT. Positions 795–941 constitute a VPS9 domain; the sequence is LFPDTKLLEF…IQKEDMRPHH (147 aa).

As to quaternary structure, homodimer. Forms a heteromeric complex with ALS2. Interacts with ALS2 and RAB5A. Expressed in heart, lung, liver and kidney.

The protein resides in the cytoplasm. In terms of biological role, acts as a guanine nucleotide exchange factor (GEF) for Rab5 GTPase. Regulates the ALS2-mediated endosome dynamics. This Mus musculus (Mouse) protein is ALS2 C-terminal-like protein (Als2cl).